We begin with the raw amino-acid sequence, 537 residues long: Synaptotagmin-C (537 aa).

Over 1–52 the chain is Vesicular; the sequence is MSGDGEDELCRNALALVNELCFSVRGNHNNEKCIEFSYLLRDRDRTRHIETD. A helical membrane pass occupies residues 53–78; it reads ISVSLLSVIVTFCGIVLLGVSLFVSW. Residues 79–537 lie on the Cytoplasmic side of the membrane; sequence KLCWIPWRDK…TIVVESPHSV (459 aa). Disordered stretches follow at residues 92–111 and 142–200; these read PQRRDSQHHPHQHLHHHHSH and IKLS…EFGT. The span at 100–110 shows a compositional bias: basic residues; sequence HPHQHLHHHHS. Residues 143 to 174 show a composition bias toward polar residues; it reads KLSQTSPDIPVDTSSGSKENNIPNAHSQQQVS. Positions 228 to 477 are phospholipid binding; the sequence is EAKKHQKVNC…VIGMCRVGNA (250 aa). 2 C2 domains span residues 236–357 and 368–501; these read NCGR…TIWR and DLGE…EQWH. 11 residues coordinate Ca(2+): D267, D273, D325, F326, D327, S330, D333, D399, D405, D459, and D461.

This sequence belongs to the synaptotagmin family. Homodimer or homotrimer (possible). Ca(2+) serves as cofactor.

The protein localises to the cytoplasmic vesicle. Its subcellular location is the secretory vesicle. It localises to the synaptic vesicle membrane. The protein resides in the synapse. In terms of biological role, may have a regulatory role in the membrane interactions during trafficking of synaptic vesicles at the active zone of the synapse. It binds acidic phospholipids with a specificity that requires the presence of both an acidic head group and a diacyl backbone. This Diplobatis ommata (Ocellated electric ray) protein is Synaptotagmin-C (P65-C).